The following is a 138-amino-acid chain: Thyrotropin subunit beta (138 aa).

Residues 1–20 form the signal peptide; that stretch reads MTAIFLMSVLFGLACGQAMS. Disulfide bonds link C22/C72, C36/C87, C39/C125, C47/C103, C51/C105, and C108/C115. The N-linked (GlcNAc...) asparagine glycan is linked to N43. The propeptide occupies 133 to 138; it reads VVGLSI.

Belongs to the glycoprotein hormones subunit beta family. In terms of assembly, heterodimer of a common alpha chain and a unique beta chain which confers biological specificity to thyrotropin, lutropin, follitropin and gonadotropin.

The protein localises to the secreted. Functionally, indispensable for the control of thyroid structure and metabolism. The chain is Thyrotropin subunit beta (TSHB) from Lama glama (Llama).